The sequence spans 203 residues: Ribosome-binding factor A (203 aa).

Residues 119–141 (LAEVRRDARPAGDEDPYRRPRTV) are compositionally biased toward basic and acidic residues. Positions 119-203 (LAEVRRDARP…SPGGDPTAGR (85 aa)) are disordered. Residues 142-169 (DEDDEDEDEDLVDEFDEFDRVEELDADA) are compositionally biased toward acidic residues.

It belongs to the RbfA family. As to quaternary structure, monomer. Binds 30S ribosomal subunits, but not 50S ribosomal subunits or 70S ribosomes.

Its subcellular location is the cytoplasm. One of several proteins that assist in the late maturation steps of the functional core of the 30S ribosomal subunit. Associates with free 30S ribosomal subunits (but not with 30S subunits that are part of 70S ribosomes or polysomes). Required for efficient processing of 16S rRNA. May interact with the 5'-terminal helix region of 16S rRNA. The sequence is that of Ribosome-binding factor A from Frankia alni (strain DSM 45986 / CECT 9034 / ACN14a).